The sequence spans 169 residues: Regulator of sigma D (169 aa).

This sequence belongs to the Rsd/AlgQ family. In terms of assembly, interacts with RpoD.

It localises to the cytoplasm. Its function is as follows. Binds RpoD and negatively regulates RpoD-mediated transcription activation by preventing the interaction between the primary sigma factor RpoD with the catalytic core of the RNA polymerase and with promoter DNA. May be involved in replacement of the RNA polymerase sigma subunit from RpoD to RpoS during the transition from exponential growth to the stationary phase. The polypeptide is Regulator of sigma D (Yersinia pseudotuberculosis serotype O:1b (strain IP 31758)).